We begin with the raw amino-acid sequence, 412 residues long: Argininosuccinate synthase (412 aa).

Residues 20–28 and Ala-48 contribute to the ATP site; that span reads AYSGGLDTS. L-citrulline is bound by residues Tyr-100 and Ser-105. Gly-130 is an ATP binding site. L-aspartate is bound by residues Thr-132, Asn-136, and Asp-137. Asn-136 provides a ligand contact to L-citrulline. L-citrulline-binding residues include Arg-140, Ser-189, Ser-198, Glu-274, and Tyr-286.

Belongs to the argininosuccinate synthase family. Type 1 subfamily. As to quaternary structure, homotetramer.

The protein resides in the cytoplasm. It catalyses the reaction L-citrulline + L-aspartate + ATP = 2-(N(omega)-L-arginino)succinate + AMP + diphosphate + H(+). It functions in the pathway amino-acid biosynthesis; L-arginine biosynthesis; L-arginine from L-ornithine and carbamoyl phosphate: step 2/3. The chain is Argininosuccinate synthase from Shewanella pealeana (strain ATCC 700345 / ANG-SQ1).